We begin with the raw amino-acid sequence, 183 residues long: Protein SHI RELATED SEQUENCE 6 (183 aa).

Zn(2+) contacts are provided by Cys41, Cys44, Cys52, Cys57, Cys61, and Cys68. The zn(2)-C6 fungal-type; degenerate DNA-binding region spans 41 to 68; the sequence is CRDCGNRAKKECLFERCRTCCKSRGYNC. Residues 79-88 show a composition bias toward low complexity; sequence SSATRSSSSP. Residues 79 to 121 form a disordered region; the sequence is SSATRSSSSPSERKKKLKIDKQSSPNVSLLPTTTSRQERGFRE. Positions 100–113 are enriched in polar residues; the sequence is QSSPNVSLLPTTTS. The short motif at 157–160 is the Required for homo- and heterodimerization element; sequence ISGH.

This sequence belongs to the SHI protein family.

The protein resides in the nucleus. In terms of biological role, transcription activator that binds DNA on 5'-ACTCTAC-3' and promotes auxin homeostasis-regulating gene expression (e.g. YUC genes), as well as genes affecting stamen development, cell expansion and timing of flowering. Synergistically with other SHI-related proteins, regulates gynoecium, stamen and leaf development in a dose-dependent manner, controlling apical-basal patterning. Promotes style and stigma formation, and influences vascular development during gynoecium development. May also have a role in the formation and/or maintenance of the shoot apical meristem (SAM). The polypeptide is Protein SHI RELATED SEQUENCE 6 (SRS6) (Arabidopsis thaliana (Mouse-ear cress)).